Consider the following 144-residue polypeptide: IgW chain C region, secreted form 1/3 (144 aa).

The Ig-like domain occupies 1 to 82; sequence VYNQTTAVLG…AGSRFNDRIS (82 aa). N3, N43, and N123 each carry an N-linked (GlcNAc...) asparagine glycan. Residues C11 and C68 are joined by a disulfide bond. Residues 87–144 form a secretory tail region; sequence KGGTINLPVPGGNTPCTCPPCSCSGCMPKLVYQTDLNVTLENGGQLQYNCHQQACKIK.

As to expression, expressed mainly in lymphoid tissues including spleen, epigonal organ and circulating lymphocytes.

It localises to the secreted. This is IgW chain C region, secreted form 1/3 from Heterodontus francisci (Horn shark).